The chain runs to 677 residues: Pannexin-2 (677 aa).

Over Met-11–Val-53 the chain is Cytoplasmic. Residues Val-54–Phe-74 traverse the membrane as a helical segment. The Extracellular segment spans residues Ala-75–Pro-125. Residue Asn-86 is glycosylated (N-linked (GlcNAc...) asparagine). The helical transmembrane segment at Tyr-126 to Ala-146 threads the bilayer. Over Ser-147–Arg-230 the chain is Cytoplasmic. Residues His-231–Thr-251 form a helical membrane-spanning segment. Topologically, residues Gln-252–Asp-295 are extracellular. A helical transmembrane segment spans residues Ile-296–Phe-316. Topologically, residues Arg-317–Leu-617 are cytoplasmic. A compositionally biased stretch (polar residues) spans Thr-394 to Pro-408. 2 disordered regions span residues Thr-394–Lys-425 and Ala-485–His-512. Phosphoserine is present on residues Ser-593 and Ser-604.

The protein belongs to the pannexin family. As to quaternary structure, homoheptameric. S-palmitoylated in neural stem and progenitor cells. Post-translationally, cleaved by CASP3 and CASP7 during apoptosis. Cleavage has no effect on it function. Expression is enriched in central nervous system. Expressed in suprabasal layers of skin epidermis. As to expression, more aboundantly expressed in skin.

Its subcellular location is the cell membrane. The protein localises to the golgi apparatus membrane. It is found in the endoplasmic reticulum membrane. The enzyme catalyses ATP(in) = ATP(out). The catalysed reaction is chloride(in) = chloride(out). It carries out the reaction iodide(out) = iodide(in). It catalyses the reaction Na(+)(in) = Na(+)(out). The enzyme catalyses D-gluconate(in) = D-gluconate(out). Ion channel with a slight anion preference. Also able to release ATP. Plays a role in regulating neurogenesis and apoptosis in keratinocytes. In Mus musculus (Mouse), this protein is Pannexin-2 (Panx2).